The primary structure comprises 590 residues: Aspartate--tRNA(Asp/Asn) ligase (590 aa).

Residue Glu-175 coordinates L-aspartate. Positions 199–202 are aspartate; it reads QQYK. L-aspartate contacts are provided by Arg-221 and His-450. Residue 221–223 coordinates ATP; it reads RDE. Position 484 (Glu-484) interacts with ATP. Arg-491 provides a ligand contact to L-aspartate. 536–539 lines the ATP pocket; it reads GVDR.

Belongs to the class-II aminoacyl-tRNA synthetase family. Type 1 subfamily. As to quaternary structure, homodimer.

It is found in the cytoplasm. The enzyme catalyses tRNA(Asx) + L-aspartate + ATP = L-aspartyl-tRNA(Asx) + AMP + diphosphate. Aspartyl-tRNA synthetase with relaxed tRNA specificity since it is able to aspartylate not only its cognate tRNA(Asp) but also tRNA(Asn). Reaction proceeds in two steps: L-aspartate is first activated by ATP to form Asp-AMP and then transferred to the acceptor end of tRNA(Asp/Asn). The polypeptide is Aspartate--tRNA(Asp/Asn) ligase (Nitrobacter winogradskyi (strain ATCC 25391 / DSM 10237 / CIP 104748 / NCIMB 11846 / Nb-255)).